The chain runs to 271 residues: MLTKKPEINTILQVTPDPHSLPAAMATEDLHVYYGDNHAIKGVDLTFPENKVTALIGPSGCGKSTYLRALNRMNDEIDGCRMEGQILYDGININRKEVDLYNVRKEIGMVFQKPNPFTKSIYENVAFGLKRHGMKNKKEIMERVEKSLRRAALWDEVKDDLGKSALSLSGGQQQRLCIARAVAMQPKVLLLDEPASALDPISTSKIEDLINELKNKYTIIIVTHNMQQAARVSDYTSFFYLGEVVEFSGTSELFTNPQEKQTEDYISGNFG.

The region spanning 25–266 is the ABC transporter domain; the sequence is MATEDLHVYY…PQEKQTEDYI (242 aa). Position 57-64 (57-64) interacts with ATP; that stretch reads GPSGCGKS.

It belongs to the ABC transporter superfamily. Phosphate importer (TC 3.A.1.7) family. The complex is composed of two ATP-binding proteins (PstB), two transmembrane proteins (PstC and PstA) and a solute-binding protein (PstS).

It is found in the cell membrane. The enzyme catalyses phosphate(out) + ATP + H2O = ADP + 2 phosphate(in) + H(+). In terms of biological role, part of the ABC transporter complex PstSACB involved in phosphate import. Responsible for energy coupling to the transport system. This is Phosphate import ATP-binding protein PstB 2 from Listeria monocytogenes serovar 1/2a (strain ATCC BAA-679 / EGD-e).